A 506-amino-acid chain; its full sequence is ATP synthase subunit alpha (506 aa).

Residue 171–178 (GDRQTGKT) participates in ATP binding.

The protein belongs to the ATPase alpha/beta chains family. F-type ATPases have 2 components, CF(1) - the catalytic core - and CF(0) - the membrane proton channel. CF(1) has five subunits: alpha(3), beta(3), gamma(1), delta(1), epsilon(1). CF(0) has four main subunits: a, b, b' and c.

It localises to the cellular thylakoid membrane. It carries out the reaction ATP + H2O + 4 H(+)(in) = ADP + phosphate + 5 H(+)(out). In terms of biological role, produces ATP from ADP in the presence of a proton gradient across the membrane. The alpha chain is a regulatory subunit. In Nostoc punctiforme (strain ATCC 29133 / PCC 73102), this protein is ATP synthase subunit alpha.